A 402-amino-acid chain; its full sequence is uncharacterized protein (402 aa).

12 consecutive transmembrane segments (helical) span residues 11 to 31 (LALA…IDMY), 48 to 68 (LVQL…LIVG), 80 to 100 (LLIC…SPNI), 108 to 125 (FLQG…RAIV), 140 to 160 (LLMV…GAIL), 167 to 187 (WHTI…LIAL), 219 to 239 (FMGY…YVSG), 254 to 274 (VFSI…FIIG), 286 to 306 (LRIA…MTMI), 308 to 328 (GPLA…GMVL), 347 to 367 (SALL…LVGI), and 373 to 393 (VPMG…FFGL).

It belongs to the major facilitator superfamily. Bcr/CmlA family.

It localises to the cell membrane. This is an uncharacterized protein from Bacillus subtilis (strain 168).